Consider the following 223-residue polypeptide: Membrane protein (223 aa).

The Virion surface segment spans residues 1-18 (MAENCTLDSEQAVLLFKE). Residues 19–39 (YNLFITAFLLFLTILLQYGYA) form a helical membrane-spanning segment. Residues 40-49 (TRSRTIYILK) lie on the Intravirion side of the membrane. Residues 50–70 (MIVLWCFWPLNIAVGVISCIY) traverse the membrane as a helical segment. The Virion surface segment spans residues 71–75 (PPNTG). Residues 76-96 (GLVAAIILTVFACLSFVGYWI) form a helical membrane-spanning segment. Residues 97-223 (QSCRLFKRCR…VATGGSSLYT (127 aa)) are Intravirion-facing.

Belongs to the gammacoronaviruses M protein family. As to quaternary structure, homomultimer. Interacts with envelope E protein in the budding compartment of the host cell, which is located between endoplasmic reticulum and the Golgi complex. Forms a complex with HE and S proteins. Interacts with nucleocapsid N protein. This interaction probably participates in RNA packaging into the virus.

Its subcellular location is the virion membrane. It localises to the host Golgi apparatus membrane. Component of the viral envelope that plays a central role in virus morphogenesis and assembly via its interactions with other viral proteins. This Gallus gallus (Chicken) protein is Membrane protein.